Consider the following 231-residue polypeptide: DNA mismatch repair protein MutH (231 aa).

Belongs to the MutH family.

Its subcellular location is the cytoplasm. Sequence-specific endonuclease that cleaves unmethylated GATC sequences. It is involved in DNA mismatch repair. The chain is DNA mismatch repair protein MutH from Shewanella woodyi (strain ATCC 51908 / MS32).